An 83-amino-acid chain; its full sequence is Hainantoxin-III 8 (83 aa).

The N-terminal stretch at 1–21 (MKASMFLALAGLVLLFVVGYA) is a signal peptide. A propeptide spanning residues 22–48 (SESEEKEFPRELLSKIFAVDDFTGEER) is cleaved from the precursor. Disulfide bonds link cysteine 50–cysteine 65, cysteine 57–cysteine 70, and cysteine 64–cysteine 77. Leucine 81 is subject to Leucine amide.

This sequence belongs to the neurotoxin 10 (Hwtx-1) family. 15 (Hntx-3) subfamily. In terms of assembly, monomer. Expressed by the venom gland.

It is found in the secreted. Selective antagonist of neuronal tetrodotoxin (TTX)-sensitive voltage-gated sodium channels (IC(50)=1270 nM on Nav1.1/SCN1A, 270 nM on Nav1.2/SCN2A, 491 nM on Nav1.3/SCN3A and 232 nM on Nav1.7/SCN9A). This toxin suppress Nav1.7 current amplitude without significantly altering the activation, inactivation, and repriming kinetics. Short extreme depolarizations partially activate the toxin-bound channel, indicating voltage-dependent inhibition of this toxin. This toxin increases the deactivation of the Nav1.7 current after extreme depolarizations. The toxin-Nav1.7 complex is gradually dissociated upon prolonged strong depolarizations in a voltage-dependent manner, and the unbound toxin rebinds to Nav1.7 after a long repolarization. Moreover, analysis of chimeric channels showed that the DIIS3-S4 linker is critical for toxin binding to Nav1.7. These data are consistent with this toxin interacting with Nav1.7 site 4 and trapping the domain II voltage sensor in the closed state. The protein is Hainantoxin-III 8 of Cyriopagopus hainanus (Chinese bird spider).